A 215-amino-acid polypeptide reads, in one-letter code: MIGWLQGERIQSWEQGGRRGVVVACGGVGYEVQLTSRDQNGQGTGSACTLWVHQVQRDDGSTLFGFCDQQERDLFRTLIGVNGVGPQMALALLDCCRVHELVAAIVDGDLKRLTQAQGVGKRTAERIAVELRDRLGNWAPLQEPSLSLVDRSDVKAIPLGEPCLRDLQITLETLGYEDLEIRRAMRAVASGPDVPAEDDGDAWLRASLKWLSQSA.

Residues 1 to 67 (MIGWLQGERI…DDGSTLFGFC (67 aa)) form a domain I region. Positions 68–146 (DQQERDLFRT…NWAPLQEPSL (79 aa)) are domain II. Residues 147 to 158 (SLVDRSDVKAIP) are flexible linker. The domain III stretch occupies residues 159–215 (LGEPCLRDLQITLETLGYEDLEIRRAMRAVASGPDVPAEDDGDAWLRASLKWLSQSA).

The protein belongs to the RuvA family. As to quaternary structure, homotetramer. Forms an RuvA(8)-RuvB(12)-Holliday junction (HJ) complex. HJ DNA is sandwiched between 2 RuvA tetramers; dsDNA enters through RuvA and exits via RuvB. An RuvB hexamer assembles on each DNA strand where it exits the tetramer. Each RuvB hexamer is contacted by two RuvA subunits (via domain III) on 2 adjacent RuvB subunits; this complex drives branch migration. In the full resolvosome a probable DNA-RuvA(4)-RuvB(12)-RuvC(2) complex forms which resolves the HJ.

It localises to the cytoplasm. Its function is as follows. The RuvA-RuvB-RuvC complex processes Holliday junction (HJ) DNA during genetic recombination and DNA repair, while the RuvA-RuvB complex plays an important role in the rescue of blocked DNA replication forks via replication fork reversal (RFR). RuvA specifically binds to HJ cruciform DNA, conferring on it an open structure. The RuvB hexamer acts as an ATP-dependent pump, pulling dsDNA into and through the RuvAB complex. HJ branch migration allows RuvC to scan DNA until it finds its consensus sequence, where it cleaves and resolves the cruciform DNA. The sequence is that of Holliday junction branch migration complex subunit RuvA from Synechococcus sp. (strain WH7803).